The primary structure comprises 209 residues: High frequency lysogenization protein HflD homolog (209 aa).

Residues 79-121 are a coiled coil; that stretch reads QGLNAELTRYTLSLMVLERKLNSAKGAMDTLGDRIAGLQRQLD.

The protein belongs to the HflD family.

It localises to the cytoplasm. The protein localises to the cell inner membrane. This is High frequency lysogenization protein HflD homolog from Enterobacter sp. (strain 638).